Consider the following 373-residue polypeptide: 8-amino-7-oxononanoate synthase (373 aa).

A substrate-binding site is contributed by Arg-16. 93–94 lines the pyridoxal 5'-phosphate pocket; that stretch reads GF. His-118 lines the substrate pocket. Residues Ser-165, 190-193, and 222-225 contribute to the pyridoxal 5'-phosphate site; these read DEAH and TFSK. An N6-(pyridoxal phosphate)lysine modification is found at Lys-225. Thr-334 provides a ligand contact to substrate.

This sequence belongs to the class-II pyridoxal-phosphate-dependent aminotransferase family. BioF subfamily. In terms of assembly, homodimer. Pyridoxal 5'-phosphate is required as a cofactor.

It catalyses the reaction 6-carboxyhexanoyl-[ACP] + L-alanine + H(+) = (8S)-8-amino-7-oxononanoate + holo-[ACP] + CO2. It functions in the pathway cofactor biosynthesis; biotin biosynthesis. Functionally, catalyzes the decarboxylative condensation of pimeloyl-[acyl-carrier protein] and L-alanine to produce 8-amino-7-oxononanoate (AON), [acyl-carrier protein], and carbon dioxide. The sequence is that of 8-amino-7-oxononanoate synthase from Helicobacter pylori (strain J99 / ATCC 700824) (Campylobacter pylori J99).